Reading from the N-terminus, the 419-residue chain is eIF5-mimic protein 1 (419 aa).

The disordered stretch occupies residues 1 to 22; the sequence is MNKHQKPVLTGQRFKTRKRDEK. Position 117 is an N6-acetyllysine (Lys117). Positions 248–415 constitute a W2 domain; it reads VQQSLGTRKE…QNAEEESESE (168 aa). Phosphoserine is present on residues Ser412 and Ser414.

Belongs to the BZW family. As to quaternary structure, interacts with EIF3E, EIF2S2 and EIF3C.

The protein localises to the cytoplasm. Its function is as follows. Translation initiation regulator which represses non-AUG initiated translation and repeat-associated non-AUG (RAN) initiated translation by acting as a competitive inhibitor of eukaryotic translation initiation factor 5 (EIF5) function. Increases the accuracy of translation initiation by impeding EIF5-dependent translation from non-AUG codons by competing with it for interaction with EIF2S2 within the 43S pre-initiation complex (PIC) in an EIF3C-binding dependent manner. The sequence is that of eIF5-mimic protein 1 (BZW2) from Macaca fascicularis (Crab-eating macaque).